Here is a 256-residue protein sequence, read N- to C-terminus: LexA repressor (256 aa).

The segment at 1-31 is disordered; sequence MTSQGRGTRRGGTRGNVRAFPEGPTDAGLTP. The segment at residues 53–73 is a DNA-binding region (H-T-H motif); it reads VREIGEAVGLTSTSSVAHQLK. Active-site for autocatalytic cleavage activity residues include Ser-180 and Lys-217.

This sequence belongs to the peptidase S24 family. As to quaternary structure, homodimer.

It catalyses the reaction Hydrolysis of Ala-|-Gly bond in repressor LexA.. Represses a number of genes involved in the response to DNA damage (SOS response), including recA and lexA. In the presence of single-stranded DNA, RecA interacts with LexA causing an autocatalytic cleavage which disrupts the DNA-binding part of LexA, leading to derepression of the SOS regulon and eventually DNA repair. The protein is LexA repressor of Frankia casuarinae (strain DSM 45818 / CECT 9043 / HFP020203 / CcI3).